Reading from the N-terminus, the 128-residue chain is Flagellar basal body rod protein FlgB (128 aa).

This sequence belongs to the flagella basal body rod proteins family. As to quaternary structure, the basal body constitutes a major portion of the flagellar organelle and consists of a number of rings mounted on a central rod. In Gram-negative bacteria, at least four rings, L, P, S and M are present, whereas Gram-positive bacteria lack the L and P rings. The rod consists of about 26 subunits of FlgG in the distal portion, and FlgB, FlgC and FlgF build up the proximal portion of the rod with about 6 subunits each. Rod assembly occurs by export via the flagellum-specific pathway of its constituent proteins and by their incorporation into the rod structure in the probable order of FlgB, FlgC, FlgF and FlgG. Another protein, FliE, also assembles onto the stable rod structure.

Its subcellular location is the bacterial flagellum basal body. In terms of biological role, structural component of flagellum, the bacterial motility apparatus. Part of the rod structure of flagellar basal body. The polypeptide is Flagellar basal body rod protein FlgB (Cereibacter sphaeroides (Rhodobacter sphaeroides)).